The primary structure comprises 739 residues: BEL1-like homeodomain protein 2 (739 aa).

Disordered stretches follow at residues 23–73 (SQDY…ESSV) and 143–222 (LMNP…NSQT). Over residues 41–58 (NFSNGFDRSDSPNLTTQQ) the composition is skewed to polar residues. Residues 145–155 (NPPPPQQPPSP) are compositionally biased toward pro residues. A compositionally biased stretch (low complexity) spans 179–190 (TNTTHHQNYTNH). Residues 316 to 332 (SRYTTAAQELLEEFCSV) are SR/KY domain. Residues 341–378 (KLGNSSNPNTCGGDGGGSSPSSAGANKEHPPLSASDRI) are disordered. Residues 376–447 (DRIEHQRRKV…CLKDAVAAQL (72 aa)) form a BELL domain region. The homeobox DNA-binding region spans 498–560 (AWRPQRGLPE…NARVRLWKPM (63 aa)). The segment at 567–627 (QESKEREREE…TAPDASDADA (61 aa)) is disordered. Positions 576–585 (EELEENEEDQ) are enriched in acidic residues. A compositionally biased stretch (basic and acidic residues) spans 586–596 (ETKNSNDDKST). Residues 597–627 (KSNNNESNFTAVRTTSQTPTTTAPDASDADA) are compositionally biased toward low complexity.

Belongs to the TALE/BELL homeobox family. In terms of assembly, may form heterodimeric complexes with TALE/KNOX proteins STM, KNAT1/BP, KNAT2 and KNAT5. Interacts with OFP1, OFP2, OFP4 and OFP5. Interacts with KNATM, isoform KNATM-B. Expressed in lateral organs.

The protein resides in the nucleus. In terms of biological role, transcription factor that establishes leaf shape by repressing growth in specific subdomains of the leaf. Negatively regulates knox homeobox gene KNAT1/BP expression. This chain is BEL1-like homeodomain protein 2 (BLH2), found in Arabidopsis thaliana (Mouse-ear cress).